Reading from the N-terminus, the 239-residue chain is Fatty acid metabolism regulator protein (239 aa).

In terms of domain architecture, HTH gntR-type spans 6-74 (QSPAGFAEEY…HGKPTKVNNF (69 aa)). The H-T-H motif DNA-binding region spans 34–53 (ERELSELIGVTRTTLREVLQ).

In terms of assembly, homodimer.

The protein localises to the cytoplasm. Functionally, multifunctional regulator of fatty acid metabolism. This Enterobacter sp. (strain 638) protein is Fatty acid metabolism regulator protein.